The chain runs to 284 residues: D-tagatose-1,6-bisphosphate aldolase subunit GatY (284 aa).

Residue Asp82 is the Proton donor of the active site. Zn(2+) contacts are provided by His83 and His180. Dihydroxyacetone phosphate is bound at residue Gly181. His208 provides a ligand contact to Zn(2+). Residues 209 to 211 (GAS) and 230 to 233 (NVAT) each bind dihydroxyacetone phosphate.

Belongs to the class II fructose-bisphosphate aldolase family. TagBP aldolase GatY subfamily. In terms of assembly, forms a complex with GatZ. Zn(2+) is required as a cofactor.

It catalyses the reaction D-tagatofuranose 1,6-bisphosphate = D-glyceraldehyde 3-phosphate + dihydroxyacetone phosphate. It functions in the pathway carbohydrate metabolism; D-tagatose 6-phosphate degradation; D-glyceraldehyde 3-phosphate and glycerone phosphate from D-tagatose 6-phosphate: step 2/2. Functionally, catalytic subunit of the tagatose-1,6-bisphosphate aldolase GatYZ, which catalyzes the reversible aldol condensation of dihydroxyacetone phosphate (DHAP or glycerone-phosphate) with glyceraldehyde 3-phosphate (G3P) to produce tagatose 1,6-bisphosphate (TBP). Requires GatZ subunit for full activity and stability. Is involved in the catabolism of galactitol. The polypeptide is D-tagatose-1,6-bisphosphate aldolase subunit GatY (Escherichia coli O17:K52:H18 (strain UMN026 / ExPEC)).